Consider the following 590-residue polypeptide: Aspartate--tRNA(Asp/Asn) ligase (590 aa).

L-aspartate is bound at residue Glu-178. The aspartate stretch occupies residues 202–205 (QIYK). Arg-224 is an L-aspartate binding site. Residues 224 to 226 (RDE) and Gln-233 each bind ATP. His-453 contacts L-aspartate. Glu-487 contributes to the ATP binding site. L-aspartate is bound at residue Arg-494. Residue 539-542 (GLDR) participates in ATP binding.

Belongs to the class-II aminoacyl-tRNA synthetase family. Type 1 subfamily. Homodimer.

It is found in the cytoplasm. It carries out the reaction tRNA(Asx) + L-aspartate + ATP = L-aspartyl-tRNA(Asx) + AMP + diphosphate. In terms of biological role, aspartyl-tRNA synthetase with relaxed tRNA specificity since it is able to aspartylate not only its cognate tRNA(Asp) but also tRNA(Asn). Reaction proceeds in two steps: L-aspartate is first activated by ATP to form Asp-AMP and then transferred to the acceptor end of tRNA(Asp/Asn). This chain is Aspartate--tRNA(Asp/Asn) ligase, found in Treponema denticola (strain ATCC 35405 / DSM 14222 / CIP 103919 / JCM 8153 / KCTC 15104).